The chain runs to 570 residues: Mitogen-activated protein kinase 11 (570 aa).

The Protein kinase domain occupies 26 to 317 (YEVLEVIGKG…AQEALADPYF (292 aa)). Residues 32-40 (IGKGSYGLV) and Lys-55 each bind ATP. Asp-152 (proton acceptor) is an active-site residue. Thr-188 is modified (phosphothreonine). Residues 188–190 (TDY) carry the TXY motif. Residue Tyr-190 is modified to Phosphotyrosine.

This sequence belongs to the protein kinase superfamily. CMGC Ser/Thr protein kinase family. MAP kinase subfamily. Dually phosphorylated on Thr-188 and Tyr-190, which activates the enzyme.

The enzyme catalyses L-seryl-[protein] + ATP = O-phospho-L-seryl-[protein] + ADP + H(+). It carries out the reaction L-threonyl-[protein] + ATP = O-phospho-L-threonyl-[protein] + ADP + H(+). With respect to regulation, activated by threonine and tyrosine phosphorylation. The sequence is that of Mitogen-activated protein kinase 11 (MPK11) from Oryza sativa subsp. japonica (Rice).